The following is a 132-amino-acid chain: Small ribosomal subunit protein uS8 (132 aa).

Belongs to the universal ribosomal protein uS8 family. Part of the 30S ribosomal subunit. Contacts proteins S5 and S12.

In terms of biological role, one of the primary rRNA binding proteins, it binds directly to 16S rRNA central domain where it helps coordinate assembly of the platform of the 30S subunit. The protein is Small ribosomal subunit protein uS8 of Leuconostoc citreum (strain KM20).